The sequence spans 366 residues: Chorismate synthase (366 aa).

Positions 48 and 54 each coordinate NADP(+). Residues 125-127 (RSS), 242-243 (NA), Gly287, 302-306 (KPTSS), and Arg328 contribute to the FMN site.

The protein belongs to the chorismate synthase family. Homotetramer. FMNH2 serves as cofactor.

It carries out the reaction 5-O-(1-carboxyvinyl)-3-phosphoshikimate = chorismate + phosphate. It functions in the pathway metabolic intermediate biosynthesis; chorismate biosynthesis; chorismate from D-erythrose 4-phosphate and phosphoenolpyruvate: step 7/7. Its function is as follows. Catalyzes the anti-1,4-elimination of the C-3 phosphate and the C-6 proR hydrogen from 5-enolpyruvylshikimate-3-phosphate (EPSP) to yield chorismate, which is the branch point compound that serves as the starting substrate for the three terminal pathways of aromatic amino acid biosynthesis. This reaction introduces a second double bond into the aromatic ring system. This chain is Chorismate synthase, found in Rhodospirillum rubrum (strain ATCC 11170 / ATH 1.1.1 / DSM 467 / LMG 4362 / NCIMB 8255 / S1).